The sequence spans 134 residues: Large ribosomal subunit protein bL20 (134 aa).

The protein belongs to the bacterial ribosomal protein bL20 family.

Its function is as follows. Binds directly to 23S ribosomal RNA and is necessary for the in vitro assembly process of the 50S ribosomal subunit. It is not involved in the protein synthesizing functions of that subunit. This Sinorhizobium fredii (strain NBRC 101917 / NGR234) protein is Large ribosomal subunit protein bL20.